A 239-amino-acid chain; its full sequence is mRNA turnover protein 4 homolog (239 aa).

Residues 216–239 (QQMGDDLPESAPESEGESEEEDDS) form a disordered region. Over residues 221–239 (DLPESAPESEGESEEEDDS) the composition is skewed to acidic residues. 3 positions are modified to phosphoserine: S225, S229, and S233.

Belongs to the universal ribosomal protein uL10 family. As to quaternary structure, associates with the pre-60S ribosomal particle. Interacts with MINAS-60 (product of an alternative open reading frame of RBM10).

Its subcellular location is the nucleus. The protein resides in the nucleolus. It is found in the cytoplasm. Component of the ribosome assembly machinery. Nuclear paralog of the ribosomal protein P0, it binds pre-60S subunits at an early stage of assembly in the nucleolus, and is replaced by P0 in cytoplasmic pre-60S subunits and mature 80S ribosomes. In Bos taurus (Bovine), this protein is mRNA turnover protein 4 homolog (MRTO4).